The following is a 219-amino-acid chain: Peptide methionine sulfoxide reductase MsrA (219 aa).

A disordered region spans residues 1 to 20 (MGLFRSPRQNLPTAADALPG). The active site involves cysteine 55.

The protein belongs to the MsrA Met sulfoxide reductase family.

The enzyme catalyses L-methionyl-[protein] + [thioredoxin]-disulfide + H2O = L-methionyl-(S)-S-oxide-[protein] + [thioredoxin]-dithiol. It carries out the reaction [thioredoxin]-disulfide + L-methionine + H2O = L-methionine (S)-S-oxide + [thioredoxin]-dithiol. In terms of biological role, has an important function as a repair enzyme for proteins that have been inactivated by oxidation. Catalyzes the reversible oxidation-reduction of methionine sulfoxide in proteins to methionine. This is Peptide methionine sulfoxide reductase MsrA from Rhodospirillum centenum (strain ATCC 51521 / SW).